We begin with the raw amino-acid sequence, 514 residues long: UDP-N-acetylmuramoyl-L-alanyl-D-glutamate--2,6-diaminopimelate ligase (514 aa).

Position 37 (threonine 37) interacts with UDP-N-acetyl-alpha-D-muramoyl-L-alanyl-D-glutamate. Residue 125-131 coordinates ATP; the sequence is GTNGKTS. Residues 167 to 168, serine 194, glutamine 200, and arginine 202 each bind UDP-N-acetyl-alpha-D-muramoyl-L-alanyl-D-glutamate; that span reads TT. Lysine 234 carries the N6-carboxylysine modification. Meso-2,6-diaminopimelate-binding positions include arginine 406, 430–433, glycine 481, and glutamate 485; that span reads DNPR. Positions 430-433 match the Meso-diaminopimelate recognition motif motif; that stretch reads DNPR.

It belongs to the MurCDEF family. MurE subfamily. Mg(2+) is required as a cofactor. Carboxylation is probably crucial for Mg(2+) binding and, consequently, for the gamma-phosphate positioning of ATP.

It localises to the cytoplasm. The enzyme catalyses UDP-N-acetyl-alpha-D-muramoyl-L-alanyl-D-glutamate + meso-2,6-diaminopimelate + ATP = UDP-N-acetyl-alpha-D-muramoyl-L-alanyl-gamma-D-glutamyl-meso-2,6-diaminopimelate + ADP + phosphate + H(+). The protein operates within cell wall biogenesis; peptidoglycan biosynthesis. Catalyzes the addition of meso-diaminopimelic acid to the nucleotide precursor UDP-N-acetylmuramoyl-L-alanyl-D-glutamate (UMAG) in the biosynthesis of bacterial cell-wall peptidoglycan. In Ralstonia nicotianae (strain ATCC BAA-1114 / GMI1000) (Ralstonia solanacearum), this protein is UDP-N-acetylmuramoyl-L-alanyl-D-glutamate--2,6-diaminopimelate ligase.